The following is a 210-amino-acid chain: MLTIALPKGSLLRDSIDRFQQIGLDFSAFLEPKNRQLQILDPTHRAKALLVRAWDVPVYVEYGQAQLGIVGYDILREKKPAVAQLADLNFGGCRLSVAVPQASPYRRSVDLPPHGRVASKFVHCALEHFRRLDLPVEIIPLYGSVELGPITGMSEAIVDLVSTGRTLQENGLMEIEVLFDSSARLIAHPLSYRVNGDRLLDWVEKLRSVI.

It belongs to the ATP phosphoribosyltransferase family. Short subfamily. Heteromultimer composed of HisG and HisZ subunits.

It localises to the cytoplasm. The catalysed reaction is 1-(5-phospho-beta-D-ribosyl)-ATP + diphosphate = 5-phospho-alpha-D-ribose 1-diphosphate + ATP. It functions in the pathway amino-acid biosynthesis; L-histidine biosynthesis; L-histidine from 5-phospho-alpha-D-ribose 1-diphosphate: step 1/9. Functionally, catalyzes the condensation of ATP and 5-phosphoribose 1-diphosphate to form N'-(5'-phosphoribosyl)-ATP (PR-ATP). Has a crucial role in the pathway because the rate of histidine biosynthesis seems to be controlled primarily by regulation of HisG enzymatic activity. This chain is ATP phosphoribosyltransferase (hisG), found in Synechocystis sp. (strain ATCC 27184 / PCC 6803 / Kazusa).